Reading from the N-terminus, the 155-residue chain is Small ribosomal subunit protein uS7 (155 aa).

The protein belongs to the universal ribosomal protein uS7 family. Part of the 30S ribosomal subunit. Contacts proteins S9 and S11.

One of the primary rRNA binding proteins, it binds directly to 16S rRNA where it nucleates assembly of the head domain of the 30S subunit. Is located at the subunit interface close to the decoding center, probably blocks exit of the E-site tRNA. The sequence is that of Small ribosomal subunit protein uS7 from Xylella fastidiosa (strain 9a5c).